Reading from the N-terminus, the 473-residue chain is Cysteine--tRNA ligase (473 aa).

Zn(2+) is bound at residue C29. Residues 31-41 carry the 'HIGH' region motif; sequence ATVQSAPHIGH. Positions 207, 232, and 236 each coordinate Zn(2+). A 'KMSKS' region motif is present at residues 263 to 267; the sequence is KMSKS. K266 serves as a coordination point for ATP.

This sequence belongs to the class-I aminoacyl-tRNA synthetase family. In terms of assembly, monomer. The cofactor is Zn(2+).

The protein resides in the cytoplasm. The enzyme catalyses tRNA(Cys) + L-cysteine + ATP = L-cysteinyl-tRNA(Cys) + AMP + diphosphate. This is Cysteine--tRNA ligase from Corynebacterium kroppenstedtii (strain DSM 44385 / JCM 11950 / CIP 105744 / CCUG 35717).